Here is a 663-residue protein sequence, read N- to C-terminus: Alcohol oxidase 2 (663 aa).

8-38 is an FAD binding site; that stretch reads DILVLGGGSSGSCIAGRLANLDHSLKVGLIE. H567 functions as the Proton acceptor in the catalytic mechanism. Positions 661–663 match the Microbody targeting signal motif; that stretch reads ARF.

This sequence belongs to the GMC oxidoreductase family. Homooctamer. It depends on FAD as a cofactor.

The protein localises to the peroxisome matrix. The catalysed reaction is a primary alcohol + O2 = an aldehyde + H2O2. Its pathway is energy metabolism; methane degradation. Functionally, minor isoform of alcohol oxidase, which catalyzes the oxidation of methanol to formaldehyde and hydrogen peroxide, the first step in the methanol utilization pathway of methylotrophic yeasts. The sequence is that of Alcohol oxidase 2 (AOX2) from Komagataella phaffii (strain ATCC 76273 / CBS 7435 / CECT 11047 / NRRL Y-11430 / Wegner 21-1) (Yeast).